The chain runs to 54 residues: Ribulose bisphosphate carboxylase large chain (54 aa).

A propeptide spanning residues 1–2 (MS) is cleaved from the precursor. Proline 3 is subject to N-acetylproline. Residue lysine 14 is modified to N6,N6,N6-trimethyllysine.

It belongs to the RuBisCO large chain family. Type I subfamily. As to quaternary structure, heterohexadecamer of 8 large chains and 8 small chains.

Its subcellular location is the plastid. It is found in the chloroplast. It catalyses the reaction 2 (2R)-3-phosphoglycerate + 2 H(+) = D-ribulose 1,5-bisphosphate + CO2 + H2O. The catalysed reaction is D-ribulose 1,5-bisphosphate + O2 = 2-phosphoglycolate + (2R)-3-phosphoglycerate + 2 H(+). RuBisCO catalyzes two reactions: the carboxylation of D-ribulose 1,5-bisphosphate, the primary event in carbon dioxide fixation, as well as the oxidative fragmentation of the pentose substrate in the photorespiration process. Both reactions occur simultaneously and in competition at the same active site. This chain is Ribulose bisphosphate carboxylase large chain (rbcL), found in Ilex aquifolium (English holly).